Reading from the N-terminus, the 538-residue chain is MTRECAPPTPGSGAPLSGSVLAEAAVVFVVVLSIHAAVWDRYSWCAVALAVQAFYVQYKWDRLLQQGSAVFQFRMSANSGLLPASVVMPLLGLVMKERCQAAGNPYFERFGIVVAATGMAVALFSSVLALGITRPVPTNTCVISGLAGGVIIYIMKHSLSVGEVIEVLEALLIFVYLNMILLYLLPRCFTPGEALLVLGGISFMLNQLIKRSLTVVESQGDPLDFFLLVVVVGMVLMGIFFSTLFVFMDSGTWASSIFFHLMTCVLGLGVVLPWLHRLIRRNPLLWLFQFLFQTETRVYLLAYWCLLATVACLVVLYQNAKRSSSESKKHQAPTITRKYFHFIVVATYIPGIILDRPLLYVAATVCLAVFIFLEYVRYFRIKPLGHTLRSLLSLFLDERDSGPLILTHIYLLLGMSLPIWLVPRPCTQKGSLGGARALVPYAGVLAVGVGDTVASIFGSTMGEIRWPGTKKTFEGTMTSIFAQIISVALILIFDSGVDLNYSYAWILGSISTVSLLEAYTTQIDNLLLPLYLLILLMA.

Residues 1 to 18 (MTRECAPPTPGSGAPLSG) are Lumenal-facing. Residues 19–39 (SVLAEAAVVFVVVLSIHAAVW) traverse the membrane as a helical segment. Residues 40–74 (DRYSWCAVALAVQAFYVQYKWDRLLQQGSAVFQFR) are Cytoplasmic-facing. Residues 75-95 (MSANSGLLPASVVMPLLGLVM) form a helical membrane-spanning segment. Residues 96-111 (KERCQAAGNPYFERFG) are Lumenal-facing. Residues 112 to 132 (IVVAATGMAVALFSSVLALGI) traverse the membrane as a helical segment. At 133–134 (TR) the chain is on the cytoplasmic side. A helical membrane pass occupies residues 135–155 (PVPTNTCVISGLAGGVIIYIM). At 156-163 (KHSLSVGE) the chain is on the lumenal side. The helical transmembrane segment at 164 to 184 (VIEVLEALLIFVYLNMILLYL) threads the bilayer. Residues 185–188 (LPRC) lie on the Cytoplasmic side of the membrane. The helical transmembrane segment at 189–209 (FTPGEALLVLGGISFMLNQLI) threads the bilayer. At 210 to 224 (KRSLTVVESQGDPLD) the chain is on the lumenal side. The chain crosses the membrane as a helical span at residues 225-245 (FFLLVVVVGMVLMGIFFSTLF). At 246–254 (VFMDSGTWA) the chain is on the cytoplasmic side. A helical transmembrane segment spans residues 255 to 275 (SSIFFHLMTCVLGLGVVLPWL). The Lumenal portion of the chain corresponds to 276 to 297 (HRLIRRNPLLWLFQFLFQTETR). Residues 298 to 318 (VYLLAYWCLLATVACLVVLYQ) traverse the membrane as a helical segment. The Cytoplasmic portion of the chain corresponds to 319–337 (NAKRSSSESKKHQAPTITR). A helical membrane pass occupies residues 338–354 (KYFHFIVVATYIPGIIL). Topologically, residues 355-359 (DRPLL) are lumenal. A helical transmembrane segment spans residues 360–380 (YVAATVCLAVFIFLEYVRYFR). Residues 381–401 (IKPLGHTLRSLLSLFLDERDS) lie on the Cytoplasmic side of the membrane. Residues 402-422 (GPLILTHIYLLLGMSLPIWLV) traverse the membrane as a helical segment. The Lumenal portion of the chain corresponds to 423–436 (PRPCTQKGSLGGAR). A helical transmembrane segment spans residues 437 to 457 (ALVPYAGVLAVGVGDTVASIF). At 458-472 (GSTMGEIRWPGTKKT) the chain is on the cytoplasmic side. Residues 459–474 (STMGEIRWPGTKKTFE) form a CTP-binding region. Residues 473–493 (FEGTMTSIFAQIISVALILIF) traverse the membrane as a helical segment. Over 494–495 (DS) the chain is Lumenal. A helical transmembrane segment spans residues 496–516 (GVDLNYSYAWILGSISTVSLL). The Cytoplasmic segment spans residues 517–538 (EAYTTQIDNLLLPLYLLILLMA).

It belongs to the polyprenol kinase family.

The protein localises to the endoplasmic reticulum membrane. The catalysed reaction is a di-trans,poly-cis-dolichol + CTP = a di-trans,poly-cis-dolichyl phosphate + CDP + H(+). The protein operates within protein modification; protein glycosylation. Catalyzes CTP-mediated phosphorylation of dolichol, the terminal step in de novo dolichyl monophosphate (Dol-P) biosynthesis. Dol-P is a lipid carrier essential for the synthesis of N-linked and O-linked oligosaccharides and for GPI anchors. This is Dolichol kinase (DOLK) from Bos taurus (Bovine).